Here is a 553-residue protein sequence, read N- to C-terminus: Putative transport protein YidE (553 aa).

The next 5 helical transmembrane spans lie at Ile4 to Val24, Gly28 to Ser48, Phe65 to Ser85, Leu95 to Phe115, and Met158 to Leu178. 2 RCK C-terminal domains span residues Gln191–Gln276 and Asp279–Asn361. The next 6 helical transmembrane spans lie at Met371–Val391, Gly393–Leu413, Ile439–Val459, Leu464–Leu484, Tyr493–Ala513, and Leu533–Gly553.

Belongs to the AAE transporter (TC 2.A.81) family. YidE subfamily.

It is found in the cell membrane. This chain is Putative transport protein YidE, found in Escherichia coli O6:H1 (strain CFT073 / ATCC 700928 / UPEC).